The sequence spans 278 residues: Probable endonuclease 4 (278 aa).

H66, H106, E142, D176, H179, H213, D226, H228, and E258 together coordinate Zn(2+).

Belongs to the AP endonuclease 2 family. Zn(2+) is required as a cofactor.

It carries out the reaction Endonucleolytic cleavage to 5'-phosphooligonucleotide end-products.. Functionally, endonuclease IV plays a role in DNA repair. It cleaves phosphodiester bonds at apurinic or apyrimidinic (AP) sites, generating a 3'-hydroxyl group and a 5'-terminal sugar phosphate. This is Probable endonuclease 4 from Halothermothrix orenii (strain H 168 / OCM 544 / DSM 9562).